Reading from the N-terminus, the 632-residue chain is Epsin-3 (632 aa).

A 1,2-diacyl-sn-glycero-3-phospho-(1D-myo-inositol-4,5-bisphosphate)-binding residues include Arg8, Lys11, Arg25, Asn30, Arg63, and His73. Residues 12–144 (NIVHNYSEAE…KDEERLRQER (133 aa)) enclose the ENTH domain. The tract at residues 172–214 (YGEDYSRSRGSPSSYNSSSSSPRYTSDLEQARPQTSGEEELQL) is disordered. The segment covering 179-196 (SRGSPSSYNSSSSSPRYT) has biased composition (low complexity). Ser191 and Ser192 each carry phosphoserine. UIM domains follow at residues 209-228 (EEEL…AEKP) and 236-255 (DEDL…HEKE). Positions 257 to 296 (RSWQGDGSPMANGAGAVVHHQRDREPEREERKEEEKLKTS) are disordered. A Phosphoserine modification is found at Ser264. The span at 276 to 294 (HQRDREPEREERKEEEKLK) shows a compositional bias: basic and acidic residues. 8 tandem repeats follow at residues 321–323 (DPW), 344–346 (DPW), 371–373 (EPW), 387–389 (DPW), 404–406 (DPW), 524–526 (NPF), 537–539 (NPF), and 629–631 (NPF). The interval 321-406 (DPWDIPGFRP…KLPSTGADPW (86 aa)) is 5 X 3 AA repeats of [DE]-P-W. Disordered stretches follow at residues 326–501 (PGFR…SFLG), 525–560 (PFLT…PALG), and 604–632 (AFAP…NPFL). Positions 353 to 371 (TVLSRSQPWDLTPMLSSSE) are enriched in polar residues. Residues 524 to 631 (NPFLTGLSAP…PPPQTGTNPF (108 aa)) are 3 X 3 AA repeats of N-P-F.

Belongs to the epsin family. In terms of tissue distribution, detected in migrating keratinocytes from wounded skin, but not in differentiating keratinocytes or in normal skin. Detected in chronic wounds, basal cell carcinoma and ulcerative colitis.

The protein resides in the cytoplasm. It localises to the perinuclear region. Its subcellular location is the cytoplasmic vesicle. It is found in the clathrin-coated vesicle. The protein localises to the nucleus. This chain is Epsin-3 (EPN3), found in Homo sapiens (Human).